A 226-amino-acid polypeptide reads, in one-letter code: Leucyl/phenylalanyl-tRNA--protein transferase (226 aa).

Belongs to the L/F-transferase family.

It is found in the cytoplasm. The enzyme catalyses N-terminal L-lysyl-[protein] + L-leucyl-tRNA(Leu) = N-terminal L-leucyl-L-lysyl-[protein] + tRNA(Leu) + H(+). It catalyses the reaction N-terminal L-arginyl-[protein] + L-leucyl-tRNA(Leu) = N-terminal L-leucyl-L-arginyl-[protein] + tRNA(Leu) + H(+). It carries out the reaction L-phenylalanyl-tRNA(Phe) + an N-terminal L-alpha-aminoacyl-[protein] = an N-terminal L-phenylalanyl-L-alpha-aminoacyl-[protein] + tRNA(Phe). Its function is as follows. Functions in the N-end rule pathway of protein degradation where it conjugates Leu, Phe and, less efficiently, Met from aminoacyl-tRNAs to the N-termini of proteins containing an N-terminal arginine or lysine. The polypeptide is Leucyl/phenylalanyl-tRNA--protein transferase (Pseudomonas fluorescens (strain Pf0-1)).